A 1106-amino-acid polypeptide reads, in one-letter code: Probable NAD-specific glutamate dehydrogenase (1106 aa).

Lysine 654 is a catalytic residue.

The protein belongs to the Glu/Leu/Phe/Val dehydrogenases family. Homotetramer.

The protein resides in the cytoplasm. The catalysed reaction is L-glutamate + NAD(+) + H2O = 2-oxoglutarate + NH4(+) + NADH + H(+). Functionally, NAD(+)-dependent glutamate dehydrogenase which degrades glutamate to ammonia and alpha-ketoglutarate. This is Probable NAD-specific glutamate dehydrogenase (gdh2) from Schizosaccharomyces pombe (strain 972 / ATCC 24843) (Fission yeast).